We begin with the raw amino-acid sequence, 237 residues long: Phosphoribosylaminoimidazole-succinocarboxamide synthase (237 aa).

It belongs to the SAICAR synthetase family.

The enzyme catalyses 5-amino-1-(5-phospho-D-ribosyl)imidazole-4-carboxylate + L-aspartate + ATP = (2S)-2-[5-amino-1-(5-phospho-beta-D-ribosyl)imidazole-4-carboxamido]succinate + ADP + phosphate + 2 H(+). It participates in purine metabolism; IMP biosynthesis via de novo pathway; 5-amino-1-(5-phospho-D-ribosyl)imidazole-4-carboxamide from 5-amino-1-(5-phospho-D-ribosyl)imidazole-4-carboxylate: step 1/2. The polypeptide is Phosphoribosylaminoimidazole-succinocarboxamide synthase (Salmonella arizonae (strain ATCC BAA-731 / CDC346-86 / RSK2980)).